Reading from the N-terminus, the 251-residue chain is Probable ATP-dependent transporter ycf16 (251 aa).

The ABC transporter domain occupies 7 to 251; that stretch reads LNIKNLDVTI…EKYGYDYLNK (245 aa). ATP is bound at residue 39-46; the sequence is GKNGSGKS.

It belongs to the ABC transporter superfamily. Ycf16 family.

The protein localises to the plastid. The protein resides in the chloroplast. This Antithamnion sp. (Red alga) protein is Probable ATP-dependent transporter ycf16 (ycf16).